We begin with the raw amino-acid sequence, 159 residues long: Transcriptional repressor NrdR (159 aa).

The segment at Cys3 to Cys34 is a zinc-finger region. The region spanning Ile49–Asp139 is the ATP-cone domain.

This sequence belongs to the NrdR family. It depends on Zn(2+) as a cofactor.

Its function is as follows. Negatively regulates transcription of bacterial ribonucleotide reductase nrd genes and operons by binding to NrdR-boxes. This is Transcriptional repressor NrdR from Prochlorococcus marinus (strain MIT 9515).